Reading from the N-terminus, the 285-residue chain is Putative alkaline ceramidase dcd3B (285 aa).

3 consecutive transmembrane segments (helical) span residues 34 to 54 (TFSS…MMSA), 77 to 97 (VLFS…YHAT), and 104 to 124 (LFDE…ILTI). The N-linked (GlcNAc...) asparagine glycan is linked to Asn131. Helical transmembrane passes span 141-161 (RFLP…ITII), 166-186 (IILQ…SYMY), 200-220 (PKKF…SWLT), and 236-256 (LHAV…QFFI).

It belongs to the alkaline ceramidase family.

The protein localises to the membrane. This chain is Putative alkaline ceramidase dcd3B (dcd3B), found in Dictyostelium discoideum (Social amoeba).